Consider the following 336-residue polypeptide: Holliday junction branch migration complex subunit RuvB (336 aa).

The interval 1–182 (MKERIVNLET…FGMSFRMQFY (182 aa)) is large ATPase domain (RuvB-L). ATP contacts are provided by residues L21, R22, G63, K66, T67, S68, 129 to 131 (EDF), R172, Y182, and R219. T67 is a Mg(2+) binding site. The segment at 183 to 253 (NPSELALIIK…ITLHALNELG (71 aa)) is small ATPAse domain (RuvB-S). The segment at 256-336 (ELGFDEADLA…IPTLNPQTLF (81 aa)) is head domain (RuvB-H). DNA contacts are provided by R310 and R315.

Belongs to the RuvB family. In terms of assembly, homohexamer. Forms an RuvA(8)-RuvB(12)-Holliday junction (HJ) complex. HJ DNA is sandwiched between 2 RuvA tetramers; dsDNA enters through RuvA and exits via RuvB. An RuvB hexamer assembles on each DNA strand where it exits the tetramer. Each RuvB hexamer is contacted by two RuvA subunits (via domain III) on 2 adjacent RuvB subunits; this complex drives branch migration. In the full resolvosome a probable DNA-RuvA(4)-RuvB(12)-RuvC(2) complex forms which resolves the HJ.

The protein localises to the cytoplasm. The catalysed reaction is ATP + H2O = ADP + phosphate + H(+). In terms of biological role, the RuvA-RuvB-RuvC complex processes Holliday junction (HJ) DNA during genetic recombination and DNA repair, while the RuvA-RuvB complex plays an important role in the rescue of blocked DNA replication forks via replication fork reversal (RFR). RuvA specifically binds to HJ cruciform DNA, conferring on it an open structure. The RuvB hexamer acts as an ATP-dependent pump, pulling dsDNA into and through the RuvAB complex. RuvB forms 2 homohexamers on either side of HJ DNA bound by 1 or 2 RuvA tetramers; 4 subunits per hexamer contact DNA at a time. Coordinated motions by a converter formed by DNA-disengaged RuvB subunits stimulates ATP hydrolysis and nucleotide exchange. Immobilization of the converter enables RuvB to convert the ATP-contained energy into a lever motion, pulling 2 nucleotides of DNA out of the RuvA tetramer per ATP hydrolyzed, thus driving DNA branch migration. The RuvB motors rotate together with the DNA substrate, which together with the progressing nucleotide cycle form the mechanistic basis for DNA recombination by continuous HJ branch migration. Branch migration allows RuvC to scan DNA until it finds its consensus sequence, where it cleaves and resolves cruciform DNA. The chain is Holliday junction branch migration complex subunit RuvB from Helicobacter pylori (strain ATCC 700392 / 26695) (Campylobacter pylori).